A 263-amino-acid chain; its full sequence is Endonuclease 8 (263 aa).

The Schiff-base intermediate with DNA role is filled by Pro-2. Glu-3 functions as the Proton donor in the catalytic mechanism. The active-site Proton donor; for beta-elimination activity is Lys-53. Residues Gln-70, Arg-125, and Asn-169 each contribute to the DNA site. The FPG-type zinc finger occupies 229–263 (KVFHRDGESCERCGGIIERTMLSSRPFYWCPHCQR). Residue Arg-253 is the Proton donor; for delta-elimination activity of the active site.

Belongs to the FPG family. The cofactor is Zn(2+).

It catalyses the reaction 2'-deoxyribonucleotide-(2'-deoxyribose 5'-phosphate)-2'-deoxyribonucleotide-DNA = a 3'-end 2'-deoxyribonucleotide-(2,3-dehydro-2,3-deoxyribose 5'-phosphate)-DNA + a 5'-end 5'-phospho-2'-deoxyribonucleoside-DNA + H(+). Involved in base excision repair of DNA damaged by oxidation or by mutagenic agents. Acts as a DNA glycosylase that recognizes and removes damaged bases. Has a preference for oxidized pyrimidines, such as thymine glycol, 5,6-dihydrouracil and 5,6-dihydrothymine. Has AP (apurinic/apyrimidinic) lyase activity and introduces nicks in the DNA strand. Cleaves the DNA backbone by beta-delta elimination to generate a single-strand break at the site of the removed base with both 3'- and 5'-phosphates. This is Endonuclease 8 from Pectobacterium carotovorum subsp. carotovorum (strain PC1).